We begin with the raw amino-acid sequence, 56 residues long: uncharacterized protein (56 aa).

The segment covering 21-38 (HTHTPHPHHTHTHTHHTP) has biased composition (basic residues). Positions 21 to 40 (HTHTPHPHHTHTHTHHTPTH) are disordered.

This is an uncharacterized protein from Saccharomyces cerevisiae (strain ATCC 204508 / S288c) (Baker's yeast).